We begin with the raw amino-acid sequence, 360 residues long: Geranylgeranyl pyrophosphate synthase 9, chloroplastic (360 aa).

Residues 1-39 (MATTVHLSSSSLFSQSRGRRDNSISSVKSLRKRTVLSLS) constitute a chloroplast transit peptide. Positions 106, 109, and 138 each coordinate isopentenyl diphosphate. Residues Asp145 and Asp151 each contribute to the Mg(2+) site. Arg156 lines the dimethylallyl diphosphate pocket. Residue Arg157 coordinates isopentenyl diphosphate. Lys245, Thr246, Gln283, Lys300, and Lys310 together coordinate dimethylallyl diphosphate.

It belongs to the FPP/GGPP synthase family. As to quaternary structure, monomer. No interactions with GGR. Requires Mg(2+) as cofactor.

It is found in the plastid. Its subcellular location is the chloroplast. It carries out the reaction isopentenyl diphosphate + dimethylallyl diphosphate = (2E)-geranyl diphosphate + diphosphate. It catalyses the reaction isopentenyl diphosphate + (2E)-geranyl diphosphate = (2E,6E)-farnesyl diphosphate + diphosphate. The enzyme catalyses isopentenyl diphosphate + (2E,6E)-farnesyl diphosphate = (2E,6E,10E)-geranylgeranyl diphosphate + diphosphate. The protein operates within isoprenoid biosynthesis; farnesyl diphosphate biosynthesis; farnesyl diphosphate from geranyl diphosphate and isopentenyl diphosphate: step 1/1. It functions in the pathway isoprenoid biosynthesis; geranyl diphosphate biosynthesis; geranyl diphosphate from dimethylallyl diphosphate and isopentenyl diphosphate: step 1/1. Its pathway is isoprenoid biosynthesis; geranylgeranyl diphosphate biosynthesis; geranylgeranyl diphosphate from farnesyl diphosphate and isopentenyl diphosphate: step 1/1. Functionally, catalyzes the trans-addition of the three molecules of IPP onto DMAPP to form geranylgeranyl pyrophosphate. This chain is Geranylgeranyl pyrophosphate synthase 9, chloroplastic (GGPPS9), found in Arabidopsis thaliana (Mouse-ear cress).